The sequence spans 171 residues: Der GTPase-activating protein YihI (171 aa).

2 disordered regions span residues 1-99 (MKKP…QAEL) and 145-171 (LSYD…RGGN). Over residues 20–30 (TREELNQEARD) the composition is skewed to basic and acidic residues. Residues 31–40 (RKRLKKHRGH) are compositionally biased toward basic residues. A compositionally biased stretch (acidic residues) spans 147–160 (YDDDEEDDEEDEKQ).

It belongs to the YihI family. As to quaternary structure, interacts with Der.

Functionally, a GTPase-activating protein (GAP) that modifies Der/EngA GTPase function. May play a role in ribosome biogenesis. In Salmonella agona (strain SL483), this protein is Der GTPase-activating protein YihI.